We begin with the raw amino-acid sequence, 276 residues long: Foldase protein PrsA (276 aa).

Residues 1-18 form the signal peptide; it reads MRKWMIVAAVAAVFGLSA. Cysteine 19 is lipidated: N-palmitoyl cysteine. Residue cysteine 19 is the site of S-diacylglycerol cysteine attachment. The PpiC domain maps to 133-223; the sequence is KPKIRASHIL…YGYHIIKVTD (91 aa).

It belongs to the PrsA family.

It is found in the cell membrane. It catalyses the reaction [protein]-peptidylproline (omega=180) = [protein]-peptidylproline (omega=0). In terms of biological role, plays a major role in protein secretion by helping the post-translocational extracellular folding of several secreted proteins. The sequence is that of Foldase protein PrsA from Geobacillus sp. (strain WCH70).